The sequence spans 411 residues: Tyrosine--tRNA ligase (411 aa).

Tyr34 serves as a coordination point for L-tyrosine. Positions 39–48 match the 'HIGH' region motif; sequence CTATSLHIGS. L-tyrosine contacts are provided by Tyr171 and Gln175. The 'KMSKS' region signature appears at 231-235; it reads KMGKT. Lys234 is an ATP binding site. Positions 345–411 constitute an S4 RNA-binding domain; it reads ISAYELFHEA…GKKKHILVRV (67 aa).

The protein belongs to the class-I aminoacyl-tRNA synthetase family. TyrS type 1 subfamily. As to quaternary structure, homodimer.

The protein resides in the cytoplasm. It carries out the reaction tRNA(Tyr) + L-tyrosine + ATP = L-tyrosyl-tRNA(Tyr) + AMP + diphosphate + H(+). Catalyzes the attachment of tyrosine to tRNA(Tyr) in a two-step reaction: tyrosine is first activated by ATP to form Tyr-AMP and then transferred to the acceptor end of tRNA(Tyr). In Rickettsia conorii (strain ATCC VR-613 / Malish 7), this protein is Tyrosine--tRNA ligase.